The sequence spans 193 residues: Small ribosomal subunit protein eS1 (193 aa).

The protein belongs to the eukaryotic ribosomal protein eS1 family.

The polypeptide is Small ribosomal subunit protein eS1 (Sulfurisphaera tokodaii (strain DSM 16993 / JCM 10545 / NBRC 100140 / 7) (Sulfolobus tokodaii)).